A 396-amino-acid chain; its full sequence is 2-(3-amino-3-carboxypropyl)histidine synthase subunit 1 (396 aa).

Residues cysteine 89, cysteine 194, and cysteine 323 each contribute to the [4Fe-4S] cluster site. Positions 372-396 are disordered; sequence TNNNEANRPKREKRKPHIVVRTEAS.

This sequence belongs to the DPH1/DPH2 family. DPH1 subfamily. As to quaternary structure, component of the 2-(3-amino-3-carboxypropyl)histidine synthase complex composed of dph-1, dph-2, dph-3 and a NADH-dependent reductase. The cofactor is [4Fe-4S] cluster.

It carries out the reaction L-histidyl-[translation elongation factor 2] + S-adenosyl-L-methionine = 2-[(3S)-amino-3-carboxypropyl]-L-histidyl-[translation elongation factor 2] + S-methyl-5'-thioadenosine + H(+). It functions in the pathway protein modification; peptidyl-diphthamide biosynthesis. Its function is as follows. Catalyzes the first step of diphthamide biosynthesis, a post-translational modification of histidine which occurs in elongation factor 2. Dph-1 and dph-2 transfer a 3-amino-3-carboxypropyl (ACP) group from S-adenosyl-L-methionine (SAM) to a histidine residue, the reaction is assisted by a reduction system comprising dph-3 and a NADH-dependent reductase. The chain is 2-(3-amino-3-carboxypropyl)histidine synthase subunit 1 (dph-1) from Caenorhabditis elegans.